A 238-amino-acid polypeptide reads, in one-letter code: Probable transcriptional regulatory protein YeeN (238 aa).

Belongs to the TACO1 family. YeeN subfamily.

The protein resides in the cytoplasm. This is Probable transcriptional regulatory protein YeeN from Salmonella typhimurium (strain LT2 / SGSC1412 / ATCC 700720).